The primary structure comprises 425 residues: Histidinol dehydrogenase (425 aa).

NAD(+)-binding residues include Y124, Q184, and N207. Residues S230, Q252, and H255 each coordinate substrate. The Zn(2+) site is built by Q252 and H255. Residues E321 and H322 each act as proton acceptor in the active site. Substrate contacts are provided by H322, D355, E409, and H414. Zn(2+) is bound at residue D355. Position 414 (H414) interacts with Zn(2+).

It belongs to the histidinol dehydrogenase family. Requires Zn(2+) as cofactor.

It catalyses the reaction L-histidinol + 2 NAD(+) + H2O = L-histidine + 2 NADH + 3 H(+). The protein operates within amino-acid biosynthesis; L-histidine biosynthesis; L-histidine from 5-phospho-alpha-D-ribose 1-diphosphate: step 9/9. Functionally, catalyzes the sequential NAD-dependent oxidations of L-histidinol to L-histidinaldehyde and then to L-histidine. The chain is Histidinol dehydrogenase from Halobacterium salinarum (strain ATCC 700922 / JCM 11081 / NRC-1) (Halobacterium halobium).